Reading from the N-terminus, the 103-residue chain is Large ribosomal subunit protein eL14 (103 aa).

It belongs to the eukaryotic ribosomal protein eL14 family.

The polypeptide is Large ribosomal subunit protein eL14 (Pyrobaculum calidifontis (strain DSM 21063 / JCM 11548 / VA1)).